Here is a 479-residue protein sequence, read N- to C-terminus: Protein phosphatase 1B (479 aa).

Residues 1 to 14 (MGAFLDKPKTEKHN) are compositionally biased toward basic and acidic residues. The interval 1 to 20 (MGAFLDKPKTEKHNAHGAGN) is disordered. The N-myristoyl glycine moiety is linked to residue Gly-2. Lys-12 is covalently cross-linked (Glycyl lysine isopeptide (Lys-Gly) (interchain with G-Cter in ISG15)). Residues 23–295 (RYGLSSMQGW…DNMSIVLVCF (273 aa)) enclose the PPM-type phosphatase domain. Residues Asp-60 and Gly-61 each contribute to the Mn(2+) site. Lys-142 participates in a covalent cross-link: Glycyl lysine isopeptide (Lys-Gly) (interchain with G-Cter in ISG15). Residues Asp-243 and Asp-286 each contribute to the Mn(2+) site. Ser-386 carries the phosphoserine modification. A disordered region spans residues 423-479 (VEGEESPAEPAATATSSNSDAGNPVTMQESHTESESGLAELDSSNEDAGTKMSGEKI). The span at 430–439 (AEPAATATSS) shows a compositional bias: low complexity. Polar residues predominate over residues 440-451 (NSDAGNPVTMQE).

Belongs to the PP2C family. Monomer. Interacts with PAK6. Interacts with the phosphorylated form of IKBKB/IKKB. The cofactor is Mg(2+). Requires Mn(2+) as cofactor. In terms of processing, isgylation negatively regulates its activity. N-myristoylation is essential for the recognition of its substrates for dephosphorylation. Highly expressed in heart and skeletal muscle.

The protein resides in the cytoplasm. It localises to the cytosol. Its subcellular location is the membrane. The catalysed reaction is O-phospho-L-seryl-[protein] + H2O = L-seryl-[protein] + phosphate. It carries out the reaction O-phospho-L-threonyl-[protein] + H2O = L-threonyl-[protein] + phosphate. In terms of biological role, enzyme with a broad specificity. Dephosphorylates CDK2 and CDK6 in vitro. Dephosphorylates PRKAA1 and PRKAA2. Inhibits TBK1-mediated antiviral signaling by dephosphorylating it at 'Ser-172'. Plays an important role in the termination of TNF-alpha-mediated NF-kappa-B activation through dephosphorylating and inactivating IKBKB/IKKB. The chain is Protein phosphatase 1B (PPM1B) from Homo sapiens (Human).